Reading from the N-terminus, the 193-residue chain is Auxin-induced protein 22D (193 aa).

The tract at residues Ala16–Lys68 is disordered. Residues Leu19–Leu23 carry the EAR-like (transcriptional repression) motif. Residues Gly97 to Gly184 enclose the PB1 domain.

This sequence belongs to the Aux/IAA family. As to quaternary structure, homodimers and heterodimers.

Its subcellular location is the nucleus. Its function is as follows. Aux/IAA proteins are short-lived transcriptional factors that function as repressors of early auxin response genes at low auxin concentrations. Repression is thought to result from the interaction with auxin response factors (ARFs), proteins that bind to the auxin-responsive promoter element (AuxRE). Formation of heterodimers with ARF proteins may alter their ability to modulate early auxin response genes expression. This Vigna radiata var. radiata (Mung bean) protein is Auxin-induced protein 22D (AUX22D).